A 386-amino-acid polypeptide reads, in one-letter code: Succinate--CoA ligase [ADP-forming] subunit beta (386 aa).

Positions 9–244 constitute an ATP-grasp domain; the sequence is KELLKQFGVT…LDEEDPAEIE (236 aa). ATP is bound by residues Lys-46, 53–55, Glu-99, Ala-102, and Glu-107; that span reads GRG. 2 residues coordinate Mg(2+): Asn-199 and Asp-213. Residues Asn-264 and 321 to 323 each bind substrate; that span reads GIM.

Belongs to the succinate/malate CoA ligase beta subunit family. In terms of assembly, heterotetramer of two alpha and two beta subunits. Mg(2+) serves as cofactor.

It carries out the reaction succinate + ATP + CoA = succinyl-CoA + ADP + phosphate. The enzyme catalyses GTP + succinate + CoA = succinyl-CoA + GDP + phosphate. Its pathway is carbohydrate metabolism; tricarboxylic acid cycle; succinate from succinyl-CoA (ligase route): step 1/1. In terms of biological role, succinyl-CoA synthetase functions in the citric acid cycle (TCA), coupling the hydrolysis of succinyl-CoA to the synthesis of either ATP or GTP and thus represents the only step of substrate-level phosphorylation in the TCA. The beta subunit provides nucleotide specificity of the enzyme and binds the substrate succinate, while the binding sites for coenzyme A and phosphate are found in the alpha subunit. The protein is Succinate--CoA ligase [ADP-forming] subunit beta of Bordetella pertussis (strain Tohama I / ATCC BAA-589 / NCTC 13251).